Consider the following 655-residue polypeptide: MRPFARAALCLLAAAGHLAQAQFPPRPEGVTVLESKFGGGARISYKEPGLCETTEGVKSYAGYVHLPPGTLKDLGVEQDYPINTFFWFFEARKDPENAPLSIWMNGGPGSSSMFGMMTENGPCFVNPDSNSTRLNPHSWNNEVNMLYLDQPVQVGLSYDTLANFTRNLVTDEITKLEPGDPIPEQNATFLVGTYASRNMDTTAKGTRNAAIALWHFAQVWFQEFPGYHPRDSRISIATESYGGRYGPAFTAFFEEQNQKIKDGTWNGSEGNRHVLHLDTLMIVNGCIDRLVQWPAYPQMAYNNTYSIEAVNASIHEGMLDALYREGGCRDKINHCRSISAVSDPENIGINAMVNDVCKDAETFCSTEVRDPYQEFSGRNYYDIGQLDPSPFPAPFYMAWLNQPHVQAALGVPLNWTQSNDVVTTAFRAIGDYPRPGWLEDLAYLLENGIKVSLVYGDRDYACNWFGGELSSLAINYTDTQNFHNAGYAGIQVNSSYIGGQVRQYGNLSFSRVYEAGHEVPSYQPETALQIFHRALFNKDIATGTIDTSSRREDGKFYGSSGPSDSFVFKNEPPPQHVHFCHILDTSTCTKEQIESVENGTAVVRSWIVVDSNSTSLFPEVVGSAEPTPMPGAALVSGRIKFHVHVIKSFDYYIFI.

The first 21 residues, 1 to 21 (MRPFARAALCLLAAAGHLAQA), serve as a signal peptide directing secretion. An intrachain disulfide couples Cys-51 to Cys-123. 3 N-linked (GlcNAc...) asparagine glycosylation sites follow: Asn-130, Asn-163, and Asn-186. Ser-240 is a catalytic residue. Residues Asn-266, Asn-302, and Asn-311 are each glycosylated (N-linked (GlcNAc...) asparagine). 2 disulfides stabilise this stretch: Cys-328/Cys-364 and Cys-335/Cys-357. A glycan (N-linked (GlcNAc...) asparagine) is linked at Asn-414. Asp-459 is a catalytic residue. Cys-462 lines the substrate pocket. Residues Asn-475, Asn-493, and Asn-506 are each glycosylated (N-linked (GlcNAc...) asparagine). His-517 is a catalytic residue. Glu-518 provides a ligand contact to substrate. Residues Asn-598 and Asn-612 are each glycosylated (N-linked (GlcNAc...) asparagine). Gly-631 is lipidated: GPI-anchor amidated glycine. A propeptide spans 632–655 (AALVSGRIKFHVHVIKSFDYYIFI) (removed in mature form).

Belongs to the peptidase S10 family.

It localises to the cell membrane. The enzyme catalyses Preferential release of a C-terminal arginine or lysine residue.. Its function is as follows. Extracellular serine carboxypeptidase that contributes to pathogenicity. The protein is Carboxypeptidase S1 homolog B (SCPB) of Arthroderma otae (strain ATCC MYA-4605 / CBS 113480) (Microsporum canis).